The sequence spans 453 residues: MNNTSITGPQVLHRTKMRPLPVLEKYCISPHHGFLDDRLPLTRLSSKKYMKWEEIVADLPSLLQEDNKVRSVIDGLDVLDLDETILGDVRELRRAYSILGFMAHAYIWASGTPRDVLPECIARPLLETAHILGVPPLATYSSLVLWNFKVTDECKKTETGCLDLENITTINTFTGTVDESWFYLVSVRFEKIGSACLNHGLQILRAIRSGDKGDANVIDGLEGLAATIERLSKALMEMELKCEPNVFYFKIRPFLAGWTNMSHMGLPQGVRYGAEGQYRIFSGGSNAQSSLIQTLDILLGVKHTANAAHSSQGDSKINYLDEMKKYMPREHREFLYHLESVCNIREYVSRNASNRALQEAYGRCISMLKIFRDNHIQIVTKYIILPSNSKQHGSNKPNVLSPIEPNTKASGCLGHKVASSKTIGTGGTRLMPFLKQCRDETVATADIKNEDKN.

Histidine 331 is a binding site for heme.

Belongs to the indoleamine 2,3-dioxygenase family. Heme serves as cofactor.

It carries out the reaction D-tryptophan + O2 = N-formyl-D-kynurenine. The catalysed reaction is L-tryptophan + O2 = N-formyl-L-kynurenine. Its pathway is cofactor biosynthesis; NAD(+) biosynthesis. Functionally, catalyzes the first step in tryptophan catabolism in order to supply de novo nicotinamide adenine dinucleotide (NAD(+)) via the kynurenine pathway. Plays a role in the cellular response to telomere uncapping. The protein is Indoleamine 2,3-dioxygenase (BNA2) of Saccharomyces cerevisiae (strain ATCC 204508 / S288c) (Baker's yeast).